Here is a 765-residue protein sequence, read N- to C-terminus: 5-methyltetrahydropteroyltriglutamate--homocysteine methyltransferase (765 aa).

5-methyltetrahydropteroyltri-L-glutamate is bound by residues Arg-18–Lys-21 and Lys-114. L-homocysteine-binding positions include Ile-437 to Ser-439 and Glu-490. L-methionine contacts are provided by residues Ile-437 to Ser-439 and Glu-490. Trp-567 is a 5-methyltetrahydropteroyltri-L-glutamate binding site. Asp-605 is an L-homocysteine binding site. Asp-605 contacts L-methionine. Residue Glu-611 coordinates 5-methyltetrahydropteroyltri-L-glutamate. Residues His-647, Cys-649, and Glu-671 each coordinate Zn(2+). His-700 serves as the catalytic Proton donor. Cys-732 provides a ligand contact to Zn(2+).

The protein belongs to the vitamin-B12 independent methionine synthase family. Zn(2+) is required as a cofactor.

It carries out the reaction 5-methyltetrahydropteroyltri-L-glutamate + L-homocysteine = tetrahydropteroyltri-L-glutamate + L-methionine. It participates in amino-acid biosynthesis; L-methionine biosynthesis via de novo pathway; L-methionine from L-homocysteine (MetE route): step 1/1. Functionally, catalyzes the transfer of a methyl group from 5-methyltetrahydrofolate to homocysteine resulting in methionine formation. The polypeptide is 5-methyltetrahydropteroyltriglutamate--homocysteine methyltransferase (Listeria welshimeri serovar 6b (strain ATCC 35897 / DSM 20650 / CCUG 15529 / CIP 8149 / NCTC 11857 / SLCC 5334 / V8)).